Here is an 85-residue protein sequence, read N- to C-terminus: uncharacterized protein (85 aa).

The N-terminal stretch at M1–A21 is a signal peptide. Residues D22–E35 show a composition bias toward basic and acidic residues. A disordered region spans residues D22–L85. Positions R36–G51 are enriched in low complexity.

Its subcellular location is the secreted. This is an uncharacterized protein from Homo sapiens (Human).